A 696-amino-acid chain; its full sequence is Divalent metal transporter 1 (696 aa).

The interval 1–31 is disordered; the sequence is MHQDNSMRRAINQSRNGGSDSCDINNDREHD. Topologically, residues 1-236 are cytoplasmic; that stretch reads MHQDNSMRRA…RSNRLSFMSK (236 aa). The segment covering 11–24 has biased composition (polar residues); it reads INQSRNGGSDSCDI. A helical membrane pass occupies residues 237 to 255; it reads LKMYFNYFGPGWIVAIAYL. At 256–288 the chain is on the vacuolar side; that stretch reads DPGNICGNLNVGLIRSDDFINVNSSVKDYTGYR. N-linked (GlcNAc...) asparagine glycosylation is present at Asn-278. A helical membrane pass occupies residues 289-311; that stretch reads LLWVLVYGHILGFIFHTLSMKLG. The Cytoplasmic portion of the chain corresponds to 312 to 331; the sequence is HITGLDLAALCRKEFSSKFS. Residues 332–357 traverse the membrane as a helical segment; that stretch reads YFLYICVQIAIWGAHLQAIIGVFVAI. Residues 358–362 lie on the Vacuolar side of the membrane; the sequence is NLILG. Residues 363-382 form a helical membrane-spanning segment; sequence IPVKIAILYTLIEAFAYSFL. The Cytoplasmic portion of the chain corresponds to 383-393; that stretch reads ENKSLDLLEKV. A helical transmembrane segment spans residues 394 to 416; it reads LSLLIGILVCCFMFNVFMTPINF. The Vacuolar segment spans residues 417-435; the sequence is QEVASSILYPRIPKGKLLD. A helical membrane pass occupies residues 436-455; that stretch reads TMGLLGSVISAHIFYLHSNL. Residues 456-475 are Cytoplasmic-facing; that stretch reads TSKKKPVIYNDRMVKRYNKL. A helical transmembrane segment spans residues 476-499; that stretch reads GTIESGGSLLVSCITNCIIVLTFA. The Vacuolar portion of the chain corresponds to 500 to 529; sequence EVNISGDDRKADYNLFNAYDVMKKYFGKTS. N-linked (GlcNAc...) asparagine glycosylation is present at Asn-502. The chain crosses the membrane as a helical span at residues 530–546; that stretch reads MYIWSFGLLSSGNNASF. Topologically, residues 547–566 are cytoplasmic; sequence MCEYASKSVFEGFLNKNVNP. The chain crosses the membrane as a helical span at residues 567–585; that stretch reads FFRVIFSRIILFIMLYAYV. The Vacuolar portion of the chain corresponds to 586–596; sequence SYDKYTIDQLS. A helical transmembrane segment spans residues 597–615; that stretch reads NFINVVQILLLPLAIIPLY. Over 616-634 the chain is Cytoplasmic; sequence RFSIHKNVLGKFAIKGAFK. The chain crosses the membrane as a helical span at residues 635–657; sequence YLVFVLVISIIVANFLLTLFDFL. Residues 658–662 are Vacuolar-facing; the sequence is QYAPS. The helical transmembrane segment at 663–684 threads the bilayer; it reads NLYVIFIFISSIFYLLFIIYFF. Over 685-696 the chain is Cytoplasmic; the sequence is NMPITKTYYKDS.

It belongs to the NRAMP (TC 2.A.55) family.

The protein localises to the vacuole membrane. It catalyses the reaction Fe(2+)(in) = Fe(2+)(out). Its function is as follows. Iron transporter. Required for parasite development during the blood stages. Required for full pathogenicity. This chain is Divalent metal transporter 1, found in Plasmodium yoelii.